Here is a 198-residue protein sequence, read N- to C-terminus: Endonuclease V (198 aa).

Residues D38 and D101 each coordinate Mg(2+).

The protein belongs to the endonuclease V family. Mg(2+) is required as a cofactor.

It is found in the cytoplasm. It carries out the reaction Endonucleolytic cleavage at apurinic or apyrimidinic sites to products with a 5'-phosphate.. DNA repair enzyme involved in the repair of deaminated bases. Selectively cleaves double-stranded DNA at the second phosphodiester bond 3' to a deoxyinosine leaving behind the intact lesion on the nicked DNA. The protein is Endonuclease V of Saccharolobus islandicus (strain M.16.27) (Sulfolobus islandicus).